A 115-amino-acid polypeptide reads, in one-letter code: uncharacterized protein (115 aa).

Helical transmembrane passes span 15–35 and 52–72; these read FSTQ…EVLF and FDGV…YYSI.

It localises to the membrane. This is an uncharacterized protein from Saccharomyces cerevisiae (strain ATCC 204508 / S288c) (Baker's yeast).